A 442-amino-acid polypeptide reads, in one-letter code: Zuotin (442 aa).

The interval 49–84 (RQRHGRTFSEDERLEVKNKVQEEVKEESEDEEEDPA) is disordered. Thr-55 bears the Phosphothreonine mark. The segment covering 55-71 (TFSEDERLEVKNKVQEE) has biased composition (basic and acidic residues). 2 positions are modified to phosphoserine: Ser-57 and Ser-76. Positions 72–83 (VKEESEDEEEDP) are enriched in acidic residues. The J domain occupies 97-167 (DHYAVLGLSK…VRRRQFDSVD (71 aa)). Disordered regions lie at residues 242-270 (DGES…DNAR) and 306-331 (GARE…EAAA). Basic and acidic residues predominate over residues 316–330 (KKKEEEERRAAEEAA).

RAC is a heterodimer of the Hsp70/DnaK-type chaperone ssz1 and the Hsp40/DnaJ-type chaperone zuo1. RAC associates with ribosomes via zuo1.

Its subcellular location is the cytoplasm. Component of the ribosome-associated complex (RAC), a heterodimeric chaperone complex involved in regulation of accurate translation termination and in folding or maintaining nascent polypeptides in a folding-competent state. RAC stimulates the ATPase activity of the ribosome-associated pool of Hsp70-type chaperones SSB1/SSB2 that bind to the nascent polypeptide chain. This is Zuotin (zuo1) from Schizosaccharomyces pombe (strain 972 / ATCC 24843) (Fission yeast).